Here is a 216-residue protein sequence, read N- to C-terminus: Sugar transporter SWEET1 (216 aa).

Helical transmembrane passes span 3 to 23 (WMWL…SSGL), 36 to 56 (ENIQ…WFYY), 65 to 85 (LMIV…AYLL), 96 to 116 (QVLV…LWIL), 125 to 145 (LGLF…ADLA), 157 to 177 (SFPL…YGLV), and 181 to 201 (LYIT…FWLF). The region spanning 6–90 (LLSGACIVFT…GAYLLYSPER (85 aa)) is the MtN3/slv 1 domain. The MtN3/slv 2 domain occupies 124-206 (QLGLFCSVFT…RFWLFSQFPP (83 aa)).

It belongs to the SWEET sugar transporter family.

The protein localises to the golgi apparatus membrane. Its subcellular location is the cell membrane. In terms of biological role, mediates sugar transport across membranes. The polypeptide is Sugar transporter SWEET1 (slc50a1) (Xenopus laevis (African clawed frog)).